Reading from the N-terminus, the 106-residue chain is Large ribosomal subunit protein eL42 (106 aa).

The tract at residues 37 to 56 (SQGKRRYDRKQSGYGGQTKP) is disordered.

Belongs to the eukaryotic ribosomal protein eL42 family.

The chain is Large ribosomal subunit protein eL42 (RPL44) from Pichia kudriavzevii (Yeast).